The primary structure comprises 218 residues: Small ribosomal subunit protein uS3c (218 aa).

In terms of domain architecture, KH type-2 spans Val47–Ala118.

This sequence belongs to the universal ribosomal protein uS3 family. In terms of assembly, part of the 30S ribosomal subunit.

It is found in the plastid. The protein resides in the chloroplast. In Illicium oligandrum (Star anise), this protein is Small ribosomal subunit protein uS3c (rps3).